Here is a 157-residue protein sequence, read N- to C-terminus: MRILGLDPGLARVGYGVLEVDEQRRNQPEMVDCGIISTDAGRGEGERMVEIARDLRQLLRLHRPDLAAVEKFFFYRSSNTIAVVQARGVLIMTLARFQIPTVEYPPMQIKLALAGSGHADKGEVQDAVMRELRLNERPKPDDAADALAVGLTAWFQR.

Active-site residues include D7, E70, and D142. Residues D7, E70, and D142 each coordinate Mg(2+).

Belongs to the RuvC family. In terms of assembly, homodimer which binds Holliday junction (HJ) DNA. The HJ becomes 2-fold symmetrical on binding to RuvC with unstacked arms; it has a different conformation from HJ DNA in complex with RuvA. In the full resolvosome a probable DNA-RuvA(4)-RuvB(12)-RuvC(2) complex forms which resolves the HJ. Mg(2+) serves as cofactor.

The protein localises to the cytoplasm. It catalyses the reaction Endonucleolytic cleavage at a junction such as a reciprocal single-stranded crossover between two homologous DNA duplexes (Holliday junction).. The RuvA-RuvB-RuvC complex processes Holliday junction (HJ) DNA during genetic recombination and DNA repair. Endonuclease that resolves HJ intermediates. Cleaves cruciform DNA by making single-stranded nicks across the HJ at symmetrical positions within the homologous arms, yielding a 5'-phosphate and a 3'-hydroxyl group; requires a central core of homology in the junction. The consensus cleavage sequence is 5'-(A/T)TT(C/G)-3'. Cleavage occurs on the 3'-side of the TT dinucleotide at the point of strand exchange. HJ branch migration catalyzed by RuvA-RuvB allows RuvC to scan DNA until it finds its consensus sequence, where it cleaves and resolves the cruciform DNA. The sequence is that of Crossover junction endodeoxyribonuclease RuvC from Synechococcus sp. (strain RCC307).